A 738-amino-acid polypeptide reads, in one-letter code: Leucine-rich repeat flightless-interacting protein 1 (738 aa).

T2 carries the N-acetylthreonine modification. At S16 the chain carries Phosphoserine. Residues 40–65 (IRMKELERQQKEVEERPDKDFAEKGS) are compositionally biased toward basic and acidic residues. Residues 40-98 (IRMKELERQQKEVEERPDKDFAEKGSRNMPSLSAATLASLGGTSSRRGSGDTSISMDTE) are disordered. Low complexity predominate over residues 78–94 (SLGGTSSRRGSGDTSIS). Phosphoserine is present on residues S83, S84, S88, and S92. The stretch at 94 to 194 (SMDTEASIRE…LRQREEMLEK (101 aa)) forms a coiled coil. K249 participates in a covalent cross-link: Glycyl lysine isopeptide (Lys-Gly) (interchain with G-Cter in SUMO1). Basic and acidic residues-rich tracts occupy residues 253-262 (VEKVGQRETL) and 277-297 (DCVDRGVLHPGEKAENQRPVE). Residues 253–738 (VEKVGQRETL…SKSKEDCTMS (486 aa)) are disordered. A Phosphoserine modification is found at S302. Residues 314–326 (EVQSQDQENTSIL) are compositionally biased toward polar residues. Over residues 330–347 (EQIESHEVTNKSDSRDSN) the composition is skewed to basic and acidic residues. Residues S346 and S348 each carry the phosphoserine modification. Polar residues predominate over residues 371-380 (KNQSENSMDS). 2 stretches are compositionally biased toward basic and acidic residues: residues 381–400 (QGKENQEDLGKGSFEPRPDH) and 467–476 (SERELAHEAA). Residues 479 to 580 (EEALTQSSQA…KNKKKKAAAP (102 aa)) are DNA-binding. Composition is skewed to polar residues over residues 483-495 (TQSSQAGGENTVT) and 520-534 (TVQSGHQDTTGPGST). Basic and acidic residues predominate over residues 535 to 553 (DTKHTSPHAKERNKAKSEQ). 2 positions are modified to phosphoserine: S551 and S560. Residues 563–577 (KKTKNKKKKNKKKKA) show a composition bias toward basic residues. Basic and acidic residues predominate over residues 606 to 626 (RVQATDKKWAAETPELKEDPQ). 2 positions are modified to phosphoserine: S675 and S701. Composition is skewed to basic and acidic residues over residues 691–703 (QADEKGIEGHSVD) and 720–738 (EQAREEVGNSKSKEDCTMS).

The protein belongs to the LRRFIP family. In terms of assembly, homodimer. May also form higher oligomers. Interacts with FLII. Interacts with MYD88. Competes with FLII for MyD88-binding, even in the absence of LPS.

Its subcellular location is the nucleus. It localises to the cytoplasm. Functionally, transcriptional repressor which preferentially binds to the GC-rich consensus sequence (5'-AGCCCCCGGCG-3') and may regulate expression of TNF, EGFR and PDGFA. May control smooth muscle cells proliferation following artery injury through PDGFA repression. May also bind double-stranded RNA. Positively regulates Toll-like receptor (TLR) signaling in response to agonist probably by competing with the negative FLII regulator for MYD88-binding. The protein is Leucine-rich repeat flightless-interacting protein 1 (Lrrfip1) of Rattus norvegicus (Rat).